The primary structure comprises 404 residues: G1/S-specific cyclin-E2 (404 aa).

Residues 1-44 (MSRRSSRLQAKQQPQPSQTESPQEAQIIQAKKRKTTQDVKKRRE) form a disordered region. The span at 12 to 26 (QQPQPSQTESPQEAQ) shows a compositional bias: low complexity. The residue at position 21 (serine 21) is a Phosphoserine. A compositionally biased stretch (basic and acidic residues) spans 35-44 (TTQDVKKRRE). Position 348 is an N6-lactoyllysine (lysine 348). At serine 383 the chain carries Phosphoserine. At threonine 392 the chain carries Phosphothreonine.

Belongs to the cyclin family. Cyclin E subfamily. In terms of assembly, interacts with the CDK2 (in vivo) and CDK3 (in vitro) protein kinases to form a serine/threonine kinase holoenzyme complex. The cyclin subunit imparts substrate specificity to the complex. In terms of processing, phosphorylation by CDK2 triggers its release from CDK2 and degradation via the ubiquitin proteasome pathway. Post-translationally, lactylated at Lys-348. Delactylated by SIRT3. In terms of tissue distribution, according to PubMed:9858585, highest levels of expression in adult testis, thymus and brain. Lower levels in placenta, spleen and colon. Consistently elevated levels in tumor-derived cells compared to non-transformed proliferating cells. According to PubMed:9840927: low levels in thymus, prostate, brain, skeletal muscle, and kidney. Elevated levels in lung. According to PubMed:9840943 highly expressed in testis, placenta, thymus and brain. In a lesser extent in small intestine and colon.

Its subcellular location is the nucleus. Functionally, essential for the control of the cell cycle at the late G1 and early S phase. This chain is G1/S-specific cyclin-E2 (CCNE2), found in Homo sapiens (Human).